The chain runs to 878 residues: Probable di- and tripeptidase DUG2 (878 aa).

WD repeat units follow at residues 18–57, 68–107, 235–274, 282–322, and 362–405; these read NHAFSILSIVAFPKKRLLFAGSQDSKILVFDLPTYNLIHT, HTRSSVLCLTGSEDENFLFSGGADSLVRIWSIGEKTIRDD, RFNQLLEKSSRTSGAEHIISSAGDGISKLWEFSKDKGQNT, DKID…IIST, and PQQG…SAVP. His-520 contacts Zn(2+). The active site involves Asp-522. Asp-553 is a Zn(2+) binding site. The Proton acceptor role is filled by Glu-586. Glu-587 is a Zn(2+) binding site. The WD 6 repeat unit spans residues 608–651; that stretch reads IDWILLSNSTWVDQEHPCLNYGLRGVINAQIKVWSDKPDGHSGL. Position 853 (His-853) interacts with Zn(2+).

It belongs to the peptidase M20A family. As to quaternary structure, component of the GSH degradosomal complex composed of at least DUG1, DUG2 and DUG3. The cofactor is Zn(2+).

It is found in the cytoplasm. It localises to the nucleus. Its function is as follows. Component of the GSH degradosomal complex involved in the degradation of glutathione (GSH) and other peptides containing a gamma-glu-X bond. This chain is Probable di- and tripeptidase DUG2 (DUG2), found in Saccharomyces cerevisiae (strain ATCC 204508 / S288c) (Baker's yeast).